The sequence spans 122 residues: Proximal tubules-expressed gene protein (122 aa).

The chain crosses the membrane as a helical span at residues 33–53 (WLTGLIAMTVFLFLVLVVYVA).

It belongs to the PDZK1-interacting protein 1/SMIM24 family. As to expression, expressed in prospective pronephric mesoderm at the late gastrula stage. After neurulation, expressed in the intermediate mesoderm, eye placode and blood islands. Expression becomes restricted to the pronephric proximal tubule during embryogenesis, but is absent from the connecting tubules.

The protein resides in the membrane. In terms of biological role, essential for pronephric tubule development, acting upstream of pax8 and lhx1/lim1 and downstream of retinoic acid signaling to induce pronephric mesoderm to form pronephric tubule-specific cells. This chain is Proximal tubules-expressed gene protein (pteg), found in Xenopus laevis (African clawed frog).